A 748-amino-acid chain; its full sequence is NAD(P)H-quinone oxidoreductase subunit 5, chloroplastic (748 aa).

Transmembrane regions (helical) follow at residues 9–29 (WIIPFISLPIPILIGVGLLLF), 40–60 (WSFPSILLLSIVMIFAVYLSI), 89–109 (IDPLTCIMAILITTVGIMVLI), 125–145 (FAYMSLFNTSMLGLVTSSNLI), 147–167 (IYIFWELVGMCSYLLIGFWFT), 185–205 (GDFGLLLGILGLYWTTGSFEF), 219–239 (NEVNFLFLTLCAVLLFAGAVA), 258–278 (TPISALIHAATMVAAGIFLVA), 280–300 (LLPLFIAIPYIMNLIALIGII), 327–347 (LGYMMLALGMGSYQAALFHLI), 354–374 (ALLFLGSGSIIHSMESVVGYS), 396–416 (NAFLLGTLSLCGVPPLACFWS), 425–445 (WLYSPIFAIIACSTAGLTAFY), 550–570 (LFPMFVLSLFTLFVGVIGSPF), 611–631 (ATFSVTIAFFGIFIASFFYKP), and 728–748 (YILLYLVYLVIFILVIYFVFF).

This sequence belongs to the complex I subunit 5 family. In terms of assembly, NDH is composed of at least 16 different subunits, 5 of which are encoded in the nucleus.

It is found in the plastid. It localises to the chloroplast thylakoid membrane. It catalyses the reaction a plastoquinone + NADH + (n+1) H(+)(in) = a plastoquinol + NAD(+) + n H(+)(out). It carries out the reaction a plastoquinone + NADPH + (n+1) H(+)(in) = a plastoquinol + NADP(+) + n H(+)(out). NDH shuttles electrons from NAD(P)H:plastoquinone, via FMN and iron-sulfur (Fe-S) centers, to quinones in the photosynthetic chain and possibly in a chloroplast respiratory chain. The immediate electron acceptor for the enzyme in this species is believed to be plastoquinone. Couples the redox reaction to proton translocation, and thus conserves the redox energy in a proton gradient. The sequence is that of NAD(P)H-quinone oxidoreductase subunit 5, chloroplastic (ndhF) from Cucumis sativus (Cucumber).